The following is a 957-amino-acid chain: Glycine dehydrogenase (decarboxylating) (957 aa).

At K708 the chain carries N6-(pyridoxal phosphate)lysine.

This sequence belongs to the GcvP family. As to quaternary structure, the glycine cleavage system is composed of four proteins: P, T, L and H. The cofactor is pyridoxal 5'-phosphate.

The catalysed reaction is N(6)-[(R)-lipoyl]-L-lysyl-[glycine-cleavage complex H protein] + glycine + H(+) = N(6)-[(R)-S(8)-aminomethyldihydrolipoyl]-L-lysyl-[glycine-cleavage complex H protein] + CO2. The glycine cleavage system catalyzes the degradation of glycine. The P protein binds the alpha-amino group of glycine through its pyridoxal phosphate cofactor; CO(2) is released and the remaining methylamine moiety is then transferred to the lipoamide cofactor of the H protein. The polypeptide is Glycine dehydrogenase (decarboxylating) (Escherichia coli (strain UTI89 / UPEC)).